A 157-amino-acid polypeptide reads, in one-letter code: Ribosomal RNA large subunit methyltransferase H (157 aa).

S-adenosyl-L-methionine is bound by residues Leu-73, Gly-105, and 124–129; that span reads LSQMTF.

Belongs to the RNA methyltransferase RlmH family. As to quaternary structure, homodimer.

It localises to the cytoplasm. It carries out the reaction pseudouridine(1915) in 23S rRNA + S-adenosyl-L-methionine = N(3)-methylpseudouridine(1915) in 23S rRNA + S-adenosyl-L-homocysteine + H(+). Specifically methylates the pseudouridine at position 1915 (m3Psi1915) in 23S rRNA. The polypeptide is Ribosomal RNA large subunit methyltransferase H (Flavobacterium psychrophilum (strain ATCC 49511 / DSM 21280 / CIP 103535 / JIP02/86)).